The primary structure comprises 224 residues: 2,5-diamino-6-ribosylamino-4(3H)-pyrimidinone 5'-phosphate reductase (224 aa).

Residues threonine 57, aspartate 61, 82–85 (STAN), valine 131, and 153–156 (GASI) each bind NADP(+).

This sequence belongs to the HTP reductase family. Homodimer.

It carries out the reaction 2,5-diamino-6-(1-D-ribitylamino)pyrimidin-4(3H)-one 5'-phosphate + NADP(+) = 2,5-diamino-6-(1-D-ribosylamino)pyrimidin-4(3H)-one 5'-phosphate + NADPH + H(+). The enzyme catalyses 2,5-diamino-6-(1-D-ribitylamino)pyrimidin-4(3H)-one 5'-phosphate + NAD(+) = 2,5-diamino-6-(1-D-ribosylamino)pyrimidin-4(3H)-one 5'-phosphate + NADH + H(+). It functions in the pathway cofactor biosynthesis; riboflavin biosynthesis. Functionally, catalyzes an early step in riboflavin biosynthesis, the NADPH-dependent reduction of the ribose side chain of 2,5-diamino-6-ribosylamino-4(3H)-pyrimidinone 5'-phosphate, yielding 2,5-diamino-6-ribitylamino-4(3H)-pyrimidinone 5'-phosphate. The protein is 2,5-diamino-6-ribosylamino-4(3H)-pyrimidinone 5'-phosphate reductase (ribD2) of Aquifex aeolicus (strain VF5).